Here is a 644-residue protein sequence, read N- to C-terminus: Putative aldehyde dehydrogenase-like protein YHR039C (644 aa).

N-linked (GlcNAc...) asparagine glycosylation occurs at Asn-15. Glu-354 acts as the Proton acceptor in catalysis. Catalysis depends on Cys-389, which acts as the Nucleophile. 2 N-linked (GlcNAc...) asparagine glycosylation sites follow: Asn-565 and Asn-627.

Belongs to the aldehyde dehydrogenase family. Post-translationally, N-glycosylated.

It is found in the endoplasmic reticulum. The protein is Putative aldehyde dehydrogenase-like protein YHR039C (MSC7) of Saccharomyces cerevisiae (strain ATCC 204508 / S288c) (Baker's yeast).